Consider the following 545-residue polypeptide: MAMLAGDGRQVLILPEGYQRFVGRDAQRMNIMAARVVAETVRTTLGPMGMDKMLVDEMGDVVVTNDGVTILEEMDIEHPAAKMVVEVAKTQEDEVGDGTTTAVVLAGELLHKAEDLLQQDIHPTVIARGYRMAVEKAEEILEEIAEEIDPDDEETLKKIAKTAMTGKGVEKARDYLAELVVKAVKQVAEEEDGEIVIDTDHIKLEKKEGGGLEDTELVKGMVIDKERVHPGMPRRVENAKIALLNCPIEVKETETDAEIRITDPEQLQAFIEEEERMLSEMVDKIAETGANVVFCQKGIDDLAQHYLAKKGILAVRRVKKSDMQKLARATGARIVTNIDDLSEEDLGEAEVVEEKKVAGDKMIFVEGCKDPKAVTILIRGGTEHVVDEAERAIEDAIGVVAAALEDGKVVAGGGAPEVEVARQLRDFADGVEGREQLAVEAFADALEIIPRTLAENSGLDPIDVLVQLRAKHEDGQVTAGIDVYDGDVKDMLEEGVVEPLRVKTQALASATEAAEMILRIDDVIAARELSKEEEEEEEEGGSSEF.

Belongs to the TCP-1 chaperonin family. In terms of assembly, forms an oligomeric complex of eight-membered rings.

Its function is as follows. Molecular chaperone; binds unfolded polypeptides in vitro, and has a weak ATPase activity. The sequence is that of Thermosome subunit (ths) from Methanopyrus kandleri (strain AV19 / DSM 6324 / JCM 9639 / NBRC 100938).